The sequence spans 251 residues: Putative (5-formylfuran-3-yl)methyl phosphate synthase (251 aa).

Lysine 29 (schiff-base intermediate with substrate) is an active-site residue. Lysine 87 acts as the Proton acceptor in catalysis.

The protein belongs to the MfnB family.

It catalyses the reaction 2 D-glyceraldehyde 3-phosphate = 4-(hydroxymethyl)-2-furancarboxaldehyde phosphate + phosphate + 2 H2O. Functionally, catalyzes the formation of 4-(hydroxymethyl)-2-furancarboxaldehyde phosphate (4-HFC-P) from two molecules of glyceraldehyde-3-P (GA-3-P). This is Putative (5-formylfuran-3-yl)methyl phosphate synthase from Kitasatospora aureofaciens (Streptomyces aureofaciens).